The chain runs to 98 residues: NADH-ubiquinone oxidoreductase chain 4L (98 aa).

The next 3 membrane-spanning stretches (helical) occupy residues 1–21, 26–46, and 61–81; these read MNLIDLILIAIYVIGISGLIF, IINILIISELNLGTLGMLFVL, and LYILTFTAAESAIGLAIVVIL.

This sequence belongs to the complex I subunit 4L family.

The protein resides in the mitochondrion membrane. It carries out the reaction a ubiquinone + NADH + 5 H(+)(in) = a ubiquinol + NAD(+) + 4 H(+)(out). Its function is as follows. Core subunit of the mitochondrial membrane respiratory chain NADH dehydrogenase (Complex I) that is believed to belong to the minimal assembly required for catalysis. Complex I functions in the transfer of electrons from NADH to the respiratory chain. The immediate electron acceptor for the enzyme is believed to be ubiquinone. In Dictyostelium citrinum (Slime mold), this protein is NADH-ubiquinone oxidoreductase chain 4L (nad4L).